The following is a 588-amino-acid chain: MALNSSAFFVPCHNYNQICDLLLSSARTRSTIKGLQLHGYVVKSGLSLIPLVANNLINFYSKSQLPFDSRRAFEDSPQKSSTTWSSIISCFAQNELPWMSLEFLKKMMAGNLRPDDHVLPSATKSCAILSRCDIGRSVHCLSMKTGYDADVFVGSSLVDMYAKCGEIVYARKMFDEMPQRNVVTWSGMMYGYAQMGENEEALWLFKEALFENLAVNDYSFSSVISVCANSTLLELGRQIHGLSIKSSFDSSSFVGSSLVSLYSKCGVPEGAYQVFNEVPVKNLGIWNAMLKAYAQHSHTQKVIELFKRMKLSGMKPNFITFLNVLNACSHAGLVDEGRYYFDQMKESRIEPTDKHYASLVDMLGRAGRLQEALEVITNMPIDPTESVWGALLTSCTVHKNTELAAFAADKVFELGPVSSGMHISLSNAYAADGRFEDAAKARKLLRDRGEKKETGLSWVEERNKVHTFAAGERRHEKSKEIYEKLAELGEEMEKAGYIADTSYVLREVDGDEKNQTIRYHSERLAIAFGLITFPADRPIRVMKNLRVCGDCHNAIKFMSVCTRRVIIVRDNNRFHRFEDGKCSCNDYW.

PPR repeat units lie at residues 14-48, 49-79, 80-114, 115-149, 150-180, 181-215, 216-250, 251-281, 282-316, 317-351, and 352-386; these read NYNQ…GLSL, IPLV…SPQK, SSTT…NLRP, DDHV…GYDA, DVFV…MPQR, NVVT…NLAV, NDYS…SFDS, SSFV…VPVK, NLGI…GMKP, NFIT…RIEP, and TDKH…PTES. Residues 387-462 form a type E motif region; it reads VWGALLTSCT…ETGLSWVEER (76 aa). Residues 463–493 form a type E(+) motif region; it reads NKVHTFAAGERRHEKSKEIYEKLAELGEEME. The tract at residues 494–588 is type DYW motif; that stretch reads KAGYIADTSY…DGKCSCNDYW (95 aa).

Belongs to the PPR family. PCMP-H subfamily.

This Arabidopsis thaliana (Mouse-ear cress) protein is Putative pentatricopeptide repeat-containing protein At5g52630 (PCMP-H52).